The following is a 348-amino-acid chain: tRNA pseudouridine synthase B (348 aa).

The active-site Nucleophile is D52.

It belongs to the pseudouridine synthase TruB family. Type 1 subfamily.

It catalyses the reaction uridine(55) in tRNA = pseudouridine(55) in tRNA. Its function is as follows. Responsible for synthesis of pseudouridine from uracil-55 in the psi GC loop of transfer RNAs. The polypeptide is tRNA pseudouridine synthase B (Rhodopirellula baltica (strain DSM 10527 / NCIMB 13988 / SH1)).